We begin with the raw amino-acid sequence, 356 residues long: Peptide chain release factor 1 (356 aa).

Residue Gln-235 is modified to N5-methylglutamine.

It belongs to the prokaryotic/mitochondrial release factor family. Methylated by PrmC. Methylation increases the termination efficiency of RF1.

It is found in the cytoplasm. Peptide chain release factor 1 directs the termination of translation in response to the peptide chain termination codons UAG and UAA. The sequence is that of Peptide chain release factor 1 from Mycobacteroides abscessus (strain ATCC 19977 / DSM 44196 / CCUG 20993 / CIP 104536 / JCM 13569 / NCTC 13031 / TMC 1543 / L948) (Mycobacterium abscessus).